The chain runs to 157 residues: Protein Smg homolog (157 aa).

This sequence belongs to the Smg family.

The polypeptide is Protein Smg homolog (Shewanella frigidimarina (strain NCIMB 400)).